We begin with the raw amino-acid sequence, 255 residues long: 4-diphosphocytidyl-2-C-methyl-D-erythritol kinase (255 aa).

Lys6 is a catalytic residue. Residue 95 to 105 (PVCAGLGGGSS) participates in ATP binding. Residue Asp137 is part of the active site.

It belongs to the GHMP kinase family. IspE subfamily.

The catalysed reaction is 4-CDP-2-C-methyl-D-erythritol + ATP = 4-CDP-2-C-methyl-D-erythritol 2-phosphate + ADP + H(+). Its pathway is isoprenoid biosynthesis; isopentenyl diphosphate biosynthesis via DXP pathway; isopentenyl diphosphate from 1-deoxy-D-xylulose 5-phosphate: step 3/6. In terms of biological role, catalyzes the phosphorylation of the position 2 hydroxy group of 4-diphosphocytidyl-2C-methyl-D-erythritol. In Campylobacter jejuni subsp. jejuni serotype O:2 (strain ATCC 700819 / NCTC 11168), this protein is 4-diphosphocytidyl-2-C-methyl-D-erythritol kinase.